The following is a 399-amino-acid chain: Zinc metalloproteinase nas-25 (399 aa).

The N-terminal stretch at 1-20 (MQIYLGITICLVAFLTVIDC) is a signal peptide. The Peptidase M12A domain maps to 41-237 (QVQRDLTYRW…DQINQYYQCY (197 aa)). N-linked (GlcNAc...) asparagine glycosylation is found at Asn52 and Asn61. 4 disulfide bridges follow: Cys82-Cys236, Cys106-Cys126, Cys240-Cys260, and Cys265-Cys274. His134 lines the Zn(2+) pocket. Glu135 is a catalytic residue. The Zn(2+) site is built by His138 and His144. Residues 232-275 (QYYQCYDSCRNAGQLANCANGGIPNPNNCQVCNCPMGYGGDLCD) enclose the EGF-like domain. Asn371 carries an N-linked (GlcNAc...) asparagine glycan.

The cofactor is Zn(2+). As to expression, expressed in pharyngeal muscles, pharyngeal-intestinal valve, rectal gland cells and arcade cells.

The protein resides in the secreted. Its function is as follows. Metalloprotease. This Caenorhabditis elegans protein is Zinc metalloproteinase nas-25 (nas-25).